The sequence spans 271 residues: Mannosyl-3-phosphoglycerate phosphatase (271 aa).

Residue aspartate 13 is the Nucleophile of the active site. Aspartate 13, aspartate 15, and aspartate 214 together coordinate Mg(2+).

It belongs to the HAD-like hydrolase superfamily. MPGP family. The cofactor is Mg(2+).

Its subcellular location is the cytoplasm. The enzyme catalyses 2-O-(alpha-D-mannosyl)-3-phosphoglycerate + H2O = (2R)-2-O-(alpha-D-mannosyl)-glycerate + phosphate. In Escherichia coli O17:K52:H18 (strain UMN026 / ExPEC), this protein is Mannosyl-3-phosphoglycerate phosphatase.